Consider the following 569-residue polypeptide: Pyrophosphate--fructose 6-phosphate 1-phosphotransferase subunit beta (569 aa).

Diphosphate is bound at residue Gly107. A Mg(2+)-binding site is contributed by Asp201. Residues 229-231 (TID), 268-269 (KY), 276-278 (MGR), Glu337, and 442-445 (YEGR) each bind substrate. Residue Asp231 is the Proton acceptor of the active site.

The protein belongs to the phosphofructokinase type A (PFKA) family. PPi-dependent PFK group II subfamily. Clade 'Long' sub-subfamily. Tetramer of two alpha (regulatory) and two beta (catalytic) chains. Mg(2+) serves as cofactor.

Its subcellular location is the cytoplasm. It carries out the reaction beta-D-fructose 6-phosphate + diphosphate = beta-D-fructose 1,6-bisphosphate + phosphate + H(+). The protein operates within carbohydrate degradation; glycolysis; D-glyceraldehyde 3-phosphate and glycerone phosphate from D-glucose: step 3/4. Its activity is regulated as follows. Allosterically activated by fructose 2,6-bisphosphate. Functionally, catalytic subunit of pyrophosphate--fructose 6-phosphate 1-phosphotransferase. Catalyzes the phosphorylation of D-fructose 6-phosphate, the first committing step of glycolysis. Uses inorganic phosphate (PPi) as phosphoryl donor instead of ATP like common ATP-dependent phosphofructokinases (ATP-PFKs), which renders the reaction reversible, and can thus function both in glycolysis and gluconeogenesis. This Solanum tuberosum (Potato) protein is Pyrophosphate--fructose 6-phosphate 1-phosphotransferase subunit beta.